Reading from the N-terminus, the 261-residue chain is Glucose 1-dehydrogenase 1 (261 aa).

11 to 35 serves as a coordination point for NADP(+); sequence VITGSSTGLGKAMAIRFATEKAKVV. Residue S145 coordinates substrate. The active-site Proton acceptor is the Y158.

This sequence belongs to the short-chain dehydrogenases/reductases (SDR) family. In terms of assembly, homotetramer.

The enzyme catalyses D-glucose + NAD(+) = D-glucono-1,5-lactone + NADH + H(+). The catalysed reaction is D-glucose + NADP(+) = D-glucono-1,5-lactone + NADPH + H(+). Functionally, may play some role in spore germination. This chain is Glucose 1-dehydrogenase 1 (gdhI), found in Priestia megaterium (Bacillus megaterium).